The sequence spans 153 residues: UPF0756 membrane protein LSEI_1366 (153 aa).

A run of 4 helical transmembrane segments spans residues 4-24, 52-72, 85-105, and 115-135; these read WLFL…SLII, WGVT…EIGF, WIAI…VGLL, and LVFG…GPVI.

It belongs to the UPF0756 family.

Its subcellular location is the cell membrane. The sequence is that of UPF0756 membrane protein LSEI_1366 from Lacticaseibacillus paracasei (strain ATCC 334 / BCRC 17002 / CCUG 31169 / CIP 107868 / KCTC 3260 / NRRL B-441) (Lactobacillus paracasei).